A 271-amino-acid polypeptide reads, in one-letter code: 3-methyl-2-oxobutanoate hydroxymethyltransferase (271 aa).

Mg(2+) is bound by residues D51 and D90. Residues 51 to 52, D90, and K118 each bind 3-methyl-2-oxobutanoate; that span reads DS. E120 contributes to the Mg(2+) binding site. E186 serves as the catalytic Proton acceptor.

This sequence belongs to the PanB family. Homodecamer; pentamer of dimers. Mg(2+) is required as a cofactor.

It is found in the cytoplasm. The catalysed reaction is 3-methyl-2-oxobutanoate + (6R)-5,10-methylene-5,6,7,8-tetrahydrofolate + H2O = 2-dehydropantoate + (6S)-5,6,7,8-tetrahydrofolate. Its pathway is cofactor biosynthesis; (R)-pantothenate biosynthesis; (R)-pantoate from 3-methyl-2-oxobutanoate: step 1/2. In terms of biological role, catalyzes the reversible reaction in which hydroxymethyl group from 5,10-methylenetetrahydrofolate is transferred onto alpha-ketoisovalerate to form ketopantoate. This Xanthomonas oryzae pv. oryzae (strain PXO99A) protein is 3-methyl-2-oxobutanoate hydroxymethyltransferase.